The primary structure comprises 604 residues: Protein CBFA2T2 (604 aa).

Residues lysine 25–glutamine 105 are disordered. Phosphoserine is present on serine 33. Lysine 38 participates in a covalent cross-link: Glycyl lysine isopeptide (Lys-Gly) (interchain with G-Cter in SUMO2). Residues proline 46–proline 59 show a composition bias toward pro residues. Polar residues-rich tracts occupy residues phenylalanine 64–threonine 79 and glutamine 88–glutamine 105. The tract at residues leucine 107–serine 215 is interaction with PRDM14. The 96-residue stretch at alanine 113–glutamate 208 folds into the TAFH domain. A disordered region spans residues valine 229 to proline 265. Residues proline 236–isoleucine 251 show a composition bias toward basic and acidic residues. Residue serine 264 is modified to Phosphoserine. The segment at glutamine 331–glutamate 377 is nervy homology region 2 (NHR2). The tract at residues arginine 397–arginine 427 is disordered. Residues glutamate 402–aspartate 419 show a composition bias toward polar residues. Serine 409 bears the Phosphoserine mark. Residues valine 435–aspartate 484 form a nervy homology region 3 (NHR3) region. Lysine 449 participates in a covalent cross-link: Glycyl lysine isopeptide (Lys-Gly) (interchain with G-Cter in SUMO2). Positions glutamine 451 to glutamate 491 form a coiled coil. Residues cysteine 507, cysteine 510, cysteine 518, cysteine 521, cysteine 527, cysteine 531, histidine 539, and cysteine 543 each contribute to the Zn(2+) site. Residues cysteine 507 to cysteine 543 form an MYND-type zinc finger. The disordered stretch occupies residues leucine 547 to leucine 604. Serine 577 is subject to Phosphoserine. Low complexity predominate over residues threonine 583 to alanine 598.

This sequence belongs to the CBFA2T family. Homooligomer. Homotetramerization is mediated by nervy homology region 2. Can interact with RUNX1T1/CBFA2T1 and CBFA2T3/MTG16; heterotetramerization between members of the CBFA2T family is proposed. Forms a heterooligomer with the AML1-MTG8/ETO fusion protein. Interacts with PRDM14. Interacts with RBPJ, GFI1, TCF4. Interacts with TAL1 and CBFA2T3/MTG16; the heteromer with CBFA2T3/MTG16 may function in repression of TAL1. Ubiquitously expressed in fetal and adult tissues. Highly expressed in adult brain, heart, lung, kidney, lymph node, appendix, thymus, testis, uterus, small intestine, prostate and thymus.

Its subcellular location is the nucleus. Functionally, transcriptional corepressor which facilitates transcriptional repression via its association with DNA-binding transcription factors and recruitment of other corepressors and histone-modifying enzymes. Via association with PRDM14 is involved in regulation of embryonic stem cell (ESC) pluripotency. Involved in primordial germ cell (PCG) formation. Stabilizes PRDM14 and OCT4 on chromatin in a homooligomerization-dependent manner. Can repress the expression of MMP7 in a ZBTB33-dependent manner. May function as a complex with the chimeric protein RUNX1/AML1-CBFA2T1/MTG8 (AML1-MTG8/ETO fusion protein) which is produced in acute myeloid leukemia with the chromosomal translocation t(8;21). May thus be involved in the repression of AML1-dependent transcription and the induction of G-CSF/CSF3-dependent cell growth. May be a tumor suppressor gene candidate involved in myeloid tumors with the deletion of the 20q11 region. Through heteromerization with CBFA2T3/MTG16 may be involved in regulation of the proliferation and the differentiation of erythroid progenitors by repressing the expression of TAL1 target genes. Required for the maintenance of the secretory cell lineage in the small intestine. Can inhibit Notch signaling probably by association with RBPJ and may be involved in GFI1-mediated Paneth cell differentiation. The sequence is that of Protein CBFA2T2 (CBFA2T2) from Homo sapiens (Human).